The chain runs to 457 residues: Serine--tRNA ligase (457 aa).

An L-serine-binding site is contributed by 252 to 254; that stretch reads TAE. Residues 283-285 and valine 299 each bind ATP; that span reads RKE. Glutamate 306 contacts L-serine. 370-373 is an ATP binding site; the sequence is EMVS. Threonine 406 contacts L-serine.

The protein belongs to the class-II aminoacyl-tRNA synthetase family. Type-1 seryl-tRNA synthetase subfamily. As to quaternary structure, homodimer. The tRNA molecule binds across the dimer.

The protein resides in the cytoplasm. The enzyme catalyses tRNA(Ser) + L-serine + ATP = L-seryl-tRNA(Ser) + AMP + diphosphate + H(+). The catalysed reaction is tRNA(Sec) + L-serine + ATP = L-seryl-tRNA(Sec) + AMP + diphosphate + H(+). It functions in the pathway aminoacyl-tRNA biosynthesis; selenocysteinyl-tRNA(Sec) biosynthesis; L-seryl-tRNA(Sec) from L-serine and tRNA(Sec): step 1/1. In terms of biological role, catalyzes the attachment of serine to tRNA(Ser). Is also able to aminoacylate tRNA(Sec) with serine, to form the misacylated tRNA L-seryl-tRNA(Sec), which will be further converted into selenocysteinyl-tRNA(Sec). The protein is Serine--tRNA ligase of Saccharolobus islandicus (strain M.14.25 / Kamchatka #1) (Sulfolobus islandicus).